The primary structure comprises 1356 residues: Fibronectin type III domain containing protein 3C1 (1356 aa).

Disordered stretches follow at residues 303–341 (PRNMADNIPDTNTTDTITSSSAHTPSISTSNATFCSDNN), 356–402 (TYDE…SDVA), and 428–452 (NQKKSQSSNASLKEHNTEDRTQPGC). Positions 308 to 341 (DNIPDTNTTDTITSSSAHTPSISTSNATFCSDNN) are enriched in low complexity. A compositionally biased stretch (polar residues) spans 370–393 (PSCTSQSASNPSVSENAHNPSSIN). The span at 439 to 448 (LKEHNTEDRT) shows a compositional bias: basic and acidic residues. Fibronectin type-III domains are found at residues 454 to 549 (NIEK…TPGC), 553 to 648 (PPLA…TPPA), 650 to 741 (LPPK…TRPA), and 745 to 842 (CPNK…TLPP). A compositionally biased stretch (polar residues) spans 825 to 838 (GQSRPSDVLTIQTP). A disordered region spans residues 825-894 (GQSRPSDVLT…QDRKVHPSSE (70 aa)). Residues 883–894 (PHQDRKVHPSSE) show a composition bias toward basic and acidic residues. 4 Fibronectin type-III domains span residues 914–1007 (PPSQ…TPGT), 1017–1103 (EVES…TKPL), 1104–1199 (PPEP…TKSP), and 1202–1299 (ALKA…TYKH). The tract at residues 1299–1320 (HHSGHGKGSGSKGKGNHNDKGE) is disordered. The helical transmembrane segment at 1330–1350 (TFVLTLLIGFALIAVLCAVAV) threads the bilayer. The Cytoplasmic segment spans residues 1351-1356 (QYLLIN).

This sequence belongs to the FNDC3 family.

The protein localises to the membrane. This Mus musculus (Mouse) protein is Fibronectin type III domain containing protein 3C1 (Fndc3c1).